The sequence spans 121 residues: Small ribosomal subunit protein bS6 (121 aa).

It belongs to the bacterial ribosomal protein bS6 family.

In terms of biological role, binds together with bS18 to 16S ribosomal RNA. In Rickettsia felis (strain ATCC VR-1525 / URRWXCal2) (Rickettsia azadi), this protein is Small ribosomal subunit protein bS6.